Reading from the N-terminus, the 225-residue chain is Cytochrome b6-f complex iron-sulfur subunit, chloroplastic (225 aa).

The transit peptide at 1 to 46 (MASTALSTASNPTQLCRSRASLGKPVKGLGFGRERVPRTATTITCQ) directs the protein to the chloroplast. A helical membrane pass occupies residues 69-89 (LLGAISLPTVGMLVPYGAFFI). Positions 112–208 (AEEWLKTHGP…ADVDDGKVLF (97 aa)) constitute a Rieske domain. Residues Cys-154, His-156, Cys-172, and His-175 each coordinate [2Fe-2S] cluster. An intrachain disulfide couples Cys-159 to Cys-174.

The protein belongs to the Rieske iron-sulfur protein family. In terms of assembly, the 4 large subunits of the cytochrome b6-f complex are cytochrome b6, subunit IV (17 kDa polypeptide, petD), cytochrome f and the Rieske protein, while the 4 small subunits are petG, petL, petM and petN. The complex functions as a dimer. [2Fe-2S] cluster serves as cofactor.

Its subcellular location is the plastid. It localises to the chloroplast thylakoid membrane. The catalysed reaction is 2 oxidized [plastocyanin] + a plastoquinol + 2 H(+)(in) = 2 reduced [plastocyanin] + a plastoquinone + 4 H(+)(out). Component of the cytochrome b6-f complex, which mediates electron transfer between photosystem II (PSII) and photosystem I (PSI), cyclic electron flow around PSI, and state transitions. The sequence is that of Cytochrome b6-f complex iron-sulfur subunit, chloroplastic (petC) from Oryza sativa subsp. japonica (Rice).